The primary structure comprises 1215 residues: Endoplasmic reticulum transmembrane helix translocase (1215 aa).

Over 1-27 (MTKKSFVSSPIVRDSTLLVPKSLIAKP) the chain is Cytoplasmic. Residues 28–43 (YVLPFFPLYATFAQLY) traverse the membrane as a helical segment. The Lumenal segment spans residues 44–56 (FQQYDRYIKGPEW). A helical transmembrane segment spans residues 57–76 (TFVYLGTLVSLNILVMLMPA). Residues 77–188 (WNVKIKAKFN…ENSFDIPIPT (112 aa)) lie on the Cytoplasmic side of the membrane. The A-domain; part 1 stretch occupies residues 156-185 (KIGDFQKCKGHSGDLTHLKRLYGENSFDIP). The chain crosses the membrane as a helical span at residues 189–216 (FMELFKEHAVAPLFVFQVFCVALWLLDE). A topological domain (lumenal) is located at residue phenylalanine 217. Residues 218-246 (WYYSLFNLFMIISMEAAAVFQRLTALKEF) traverse the membrane as a helical segment. Over 247–395 (RTMGIKPYTI…IYSAERVSVD (149 aa)) the chain is Cytoplasmic. Positions 250–390 (GIKPYTINVF…LVRVMIYSAE (141 aa)) are A-domain; part 2. A Phosphoserine modification is found at serine 324. Residues 396–425 (NKEALMFILFLLIFAVIASWYVWVEGTKMG) traverse the membrane as a helical segment. Over 426–427 (RI) the chain is Lumenal. 2 helical membrane-spanning segments follow: residues 428–442 (QSKL…ITSV) and 446–464 (ELPM…ALAK). Over 465–971 (FYVYCTEPFR…APFTSKLANV (507 aa)) the chain is Cytoplasmic. A P-domain; part 1 region spans residues 466 to 495 (YVYCTEPFRIPFAGRIDVCCFDKTGTLTGE). Catalysis depends on aspartate 487, which acts as the 4-aspartylphosphate intermediate. The Mg(2+) site is built by aspartate 487 and threonine 489. Residues 487–489 (DKT), phenylalanine 582, arginine 634, aspartate 699, and 816–820 (DGTND) each bind ATP. Residues 497-674 (LVFEGLAGIS…FNGFLIFHCP (178 aa)) form an N-domain region. Residues 677–837 (DDAIETIKML…HVGIALLNGT (161 aa)) form a P-domain; part 2 region. Aspartate 816 is a binding site for Mg(2+). Residues 838–953 (EEGLKKLGEQ…DAQGDEAPAL (116 aa)) form an arm-like region. Serine 936 is subject to Phosphoserine. The interval 954 to 969 (KLGDASCAAPFTSKLA) is P-domain; part 3. Residues 972–1011 (SAVTNIIRQGRCALVNTIQMYKILALNCLISAYSLSIIYM) traverse the membrane as a helical segment. At 1012 to 1017 (AGVKFG) the chain is on the lumenal side. Residues 1018-1035 (DGQATVSGLLLSVCFLSI) traverse the membrane as a helical segment. At 1036–1055 (SRGKPLEKLSKQRPQSGIFN) the chain is on the cytoplasmic side. The helical transmembrane segment at 1056–1084 (VYIMGSILSQFAVHIATLVYITTEIYKLE) threads the bilayer. Residues 1085-1099 (PREPQVDLEKEFAPS) are Lumenal-facing. Residues 1100–1121 (LLNTGIFIIQLVQQVSTFAVNY) traverse the membrane as a helical segment. The Cytoplasmic segment spans residues 1122–1133 (QGEPFRENIRSN). A helical transmembrane segment spans residues 1134–1151 (KGMYYGLLGVTGLALASA). Topologically, residues 1152–1168 (TEFLPELNEAMKFVPMT) are lumenal. The chain crosses the membrane as a helical span at residues 1169–1197 (DDFKIKLTLTLLLDFFGSWGVEHFFKFFF). At 1198 to 1215 (MDDKPSDISVQQVKIASK) the chain is on the cytoplasmic side.

It belongs to the cation transport ATPase (P-type) (TC 3.A.3) family. Type V subfamily. The cofactor is Mg(2+).

The protein localises to the endoplasmic reticulum membrane. It carries out the reaction [protein]-with a C-terminal TM segment(out) + ATP + H2O = [protein]-with a C-terminal TM segment(in) + ADP + phosphate + H(+). With respect to regulation, the ATPase activity is stimulated by phosphatidylinositol 4-phosphate (PI4P). Endoplasmic reticulum translocase required to remove mitochondrial transmembrane proteins mistargeted to the endoplasmic reticulum. Acts as a dislocase that mediates the ATP-dependent extraction of mislocalized mitochondrial transmembrane proteins from the endoplasmic reticulum membrane. Specifically binds mitochondrial tail-anchored transmembrane proteins: has an atypically large substrate-binding pocket that recognizes and binds moderately hydrophobic transmembranes with short hydrophilic lumenal domains. The polypeptide is Endoplasmic reticulum transmembrane helix translocase (Saccharomyces cerevisiae (strain ATCC 204508 / S288c) (Baker's yeast)).